The sequence spans 64 residues: Large ribosomal subunit protein bL33 (64 aa).

This sequence belongs to the bacterial ribosomal protein bL33 family.

This Nostoc punctiforme (strain ATCC 29133 / PCC 73102) protein is Large ribosomal subunit protein bL33.